Reading from the N-terminus, the 435-residue chain is Tol-Pal system protein TolB (435 aa).

The N-terminal stretch at 1 to 24 (MIPMPKMIRSLLLLFCLLPLGAQA) is a signal peptide.

This sequence belongs to the TolB family. In terms of assembly, the Tol-Pal system is composed of five core proteins: the inner membrane proteins TolA, TolQ and TolR, the periplasmic protein TolB and the outer membrane protein Pal. They form a network linking the inner and outer membranes and the peptidoglycan layer.

Its subcellular location is the periplasm. In terms of biological role, part of the Tol-Pal system, which plays a role in outer membrane invagination during cell division and is important for maintaining outer membrane integrity. In Thioalkalivibrio sulfidiphilus (strain HL-EbGR7), this protein is Tol-Pal system protein TolB.